Here is a 364-residue protein sequence, read N- to C-terminus: Guanine nucleotide-binding protein alpha-6 subunit (364 aa).

The tract at residues 1–29 is disordered; that stretch reads MGAGATGLRGARLSPEERANSSKSRAIDR. G2 carries the N-myristoyl glycine lipid modification. Over residues 14-29 the composition is skewed to basic and acidic residues; sequence SPEERANSSKSRAIDR. One can recognise a G-alpha domain in the interval 40–363; sequence NRFKILLLGT…NENLRSAGLH (324 aa). The G1 motif stretch occupies residues 43-56; sequence KILLLGTAESGKST. GTP-binding positions include 48–55, 186–192, 211–215, 280–283, and A335; these read GTAESGKS, VHCRIST, DVGGQ, and NKYD. Residues S55 and T192 each coordinate Mg(2+). A G2 motif region spans residues 184–192; the sequence is DIVHCRIST. The segment at 207 to 216 is G3 motif; sequence FKMVDVGGQR. Positions 276 to 283 are G4 motif; it reads VLFLNKYD. The tract at residues 333–338 is G5 motif; it reads TTATDT.

This sequence belongs to the G-alpha family. As to quaternary structure, g proteins are composed of 3 units; alpha, beta and gamma. The alpha chain contains the guanine nucleotide binding site.

Its function is as follows. Guanine nucleotide-binding proteins (G proteins) are involved as modulators or transducers in various transmembrane signaling systems. This is Guanine nucleotide-binding protein alpha-6 subunit (gpa-6) from Caenorhabditis elegans.